Consider the following 188-residue polypeptide: Thymidine kinase (188 aa).

17 to 24 (GPMFAGKT) is an ATP binding site. Glu-92 (proton acceptor) is an active-site residue. Position 121 (Phe-121) interacts with substrate. 2 residues coordinate Zn(2+): Cys-146 and Cys-149. 166 to 170 (LILAG) lines the substrate pocket. Positions 179 and 182 each coordinate Zn(2+).

Belongs to the thymidine kinase family.

It catalyses the reaction thymidine + ATP = dTMP + ADP + H(+). Its function is as follows. Phosphorylates thymidine. ASFV replicates in the cytoplasm of infected cells and contains genes encoding a number of enzymes needed for DNA synthesis, including thymidine kinase. Important for growth in swine macrophages in vitro and is a virus virulence factor in swine. This Ornithodoros (relapsing fever ticks) protein is Thymidine kinase.